The chain runs to 20 residues: Short cationic peptide-6a (20 aa).

Ser20 carries the serine amide modification.

Expressed by the venom gland.

The protein resides in the secreted. The polypeptide is Short cationic peptide-6a (Cupiennius salei (American wandering spider)).